The primary structure comprises 163 residues: Ribonuclease P protein subunit p25-like protein (163 aa).

2 disordered regions span residues 1–22 and 129–163; these read MEHY…PQLP and NEYG…DTRF. A compositionally biased stretch (basic residues) spans 154-163; it reads PRRRARDTRF.

This sequence belongs to the histone-like Alba family.

It is found in the nucleus. Functionally, may be a component of ribonuclease P or MRP. The polypeptide is Ribonuclease P protein subunit p25-like protein (RPP25L) (Bos taurus (Bovine)).